A 292-amino-acid polypeptide reads, in one-letter code: Glycine--tRNA ligase alpha subunit (292 aa).

The protein belongs to the class-II aminoacyl-tRNA synthetase family. In terms of assembly, tetramer of two alpha and two beta subunits.

The protein localises to the cytoplasm. It carries out the reaction tRNA(Gly) + glycine + ATP = glycyl-tRNA(Gly) + AMP + diphosphate. In Buchnera aphidicola subsp. Schizaphis graminum (strain Sg), this protein is Glycine--tRNA ligase alpha subunit.